The sequence spans 154 residues: Ubiquitin-conjugating enzyme E2 L3 (154 aa).

Residues 2 to 149 (AASRRLMKEL…AEEFTKKYGE (148 aa)) enclose the UBC core domain. The active-site Glycyl thioester intermediate is cysteine 86. Lysine 131 is subject to N6-acetyllysine.

Belongs to the ubiquitin-conjugating enzyme family. As to quaternary structure, interacts with PRKN; involved in ubiquitination and degradation of misfolded proteins. Interacts with UBE3A. Interacts with CCNB1IP1, CBL, ZAP70, RNF19A, RNF19B and RNF144B. Interacts with ARIH1. Interacts with ARIH2 (via RING-type 1). Interacts with NCOA1; they functionally interact to regulate progesterone receptor transcriptional activity. Interacts with NDFIP1 (via N-terminus); the interaction mediates recruitment of UBE2L3 to ITCH and causes MAP3K7 ubiquitination. Post-translationally, ubiquitinated. The alteration of UBE2L3 protein levels during the S-phase of the cell cycle is due to ubiquitin-dependent proteasomal degradation. Autoubiquitinated in vitro.

The protein resides in the nucleus. It is found in the cytoplasm. It catalyses the reaction S-ubiquitinyl-[E1 ubiquitin-activating enzyme]-L-cysteine + [E2 ubiquitin-conjugating enzyme]-L-cysteine = [E1 ubiquitin-activating enzyme]-L-cysteine + S-ubiquitinyl-[E2 ubiquitin-conjugating enzyme]-L-cysteine.. The protein operates within protein modification; protein ubiquitination. In terms of biological role, ubiquitin-conjugating enzyme E2 that specifically acts with HECT-type and RBR family E3 ubiquitin-protein ligases. Does not function with most RING-containing E3 ubiquitin-protein ligases because it lacks intrinsic E3-independent reactivity with lysine: in contrast, it has activity with the RBR family E3 enzymes, such as PRKN, RNF31 and ARIH1, that function like RING-HECT hybrids. Accepts ubiquitin from the E1 complex and catalyzes its covalent attachment to other proteins. Mediates ubiquitination by the CUL9-RBX1 complex. In vitro catalyzes 'Lys-11'-linked polyubiquitination. Involved in the selective degradation of short-lived and abnormal proteins. Down-regulated during the S-phase it is involved in progression through the cell cycle. Regulates nuclear hormone receptors transcriptional activity. May play a role in myelopoiesis. The sequence is that of Ubiquitin-conjugating enzyme E2 L3 (UBE2L3) from Pongo abelii (Sumatran orangutan).